A 462-amino-acid chain; its full sequence is 23S rRNA (uracil(1939)-C(5))-methyltransferase RlmD (462 aa).

Positions 6–76 (KSRKPQQPEY…KRLEEAEMVE (71 aa)) constitute a TRAM domain. [4Fe-4S] cluster-binding residues include C90, C96, C99, and C178. S-adenosyl-L-methionine-binding residues include Q287, F316, N321, E340, D367, and D388. Residue C414 is the Nucleophile of the active site.

This sequence belongs to the class I-like SAM-binding methyltransferase superfamily. RNA M5U methyltransferase family. RlmD subfamily.

The enzyme catalyses uridine(1939) in 23S rRNA + S-adenosyl-L-methionine = 5-methyluridine(1939) in 23S rRNA + S-adenosyl-L-homocysteine + H(+). Its function is as follows. Catalyzes the formation of 5-methyl-uridine at position 1939 (m5U1939) in 23S rRNA. This Acinetobacter baumannii (strain AB0057) protein is 23S rRNA (uracil(1939)-C(5))-methyltransferase RlmD.